The chain runs to 209 residues: Neurotrophin-4 (209 aa).

The first 21 residues, 1 to 21, serve as a signal peptide directing secretion; that stretch reads MLPRHSCSLLLFLLLLPSVPM. Residues 22–79 constitute a propeptide that is removed on maturation; sequence EPQPPSSTLPPFLAPEWDLLSPRVALSRGTPAGPPLLFLLEAGAYGEPAGAPANRSRR. An N-linked (GlcNAc...) asparagine glycan is attached at N75. Disulfide bonds link C96/C169, C140/C198, and C157/C200.

It belongs to the NGF-beta family. In terms of tissue distribution, expressed in thymus, muscle, ovary, brain, heart, stomach and kidney. Expressed in both embryo and adult tissues.

It is found in the secreted. In terms of biological role, target-derived survival factor for peripheral sensory sympathetic neurons. May promote ameloblast differentiation and subsequent reduction in proliferation of ameloblasts. The polypeptide is Neurotrophin-4 (Ntf4) (Rattus norvegicus (Rat)).